Consider the following 388-residue polypeptide: Galactokinase (388 aa).

Glu-33–Asp-36 contributes to the substrate binding site. Residues Ser-67 and Gly-124–Ser-130 each bind ATP. Residues Ser-130 and Glu-162 each coordinate Mg(2+). The active-site Proton acceptor is Asp-174. Tyr-224 lines the substrate pocket.

It belongs to the GHMP kinase family. GalK subfamily.

The protein localises to the cytoplasm. It catalyses the reaction alpha-D-galactose + ATP = alpha-D-galactose 1-phosphate + ADP + H(+). It functions in the pathway carbohydrate metabolism; galactose metabolism. In terms of biological role, catalyzes the transfer of the gamma-phosphate of ATP to D-galactose to form alpha-D-galactose-1-phosphate (Gal-1-P). This Streptococcus thermophilus (strain ATCC BAA-491 / LMD-9) protein is Galactokinase.